A 377-amino-acid chain; its full sequence is Flap endonuclease 1 (377 aa).

An N-domain region spans residues 1–105; the sequence is MGIKGLNAII…HELSKRTARR (105 aa). D34 is a binding site for Mg(2+). 2 residues coordinate DNA: R47 and R71. Residue D87 participates in Mg(2+) binding. The segment at 99 to 119 is disordered; that stretch reads SKRTARREETEKKLQEATDQA. The interval 120 to 251 is I-domain; sequence EKMKQERRLV…VTALKLIKEY (132 aa). Residues E156, E158, D177, and D179 each contribute to the Mg(2+) site. E156 provides a ligand contact to DNA. The DNA site is built by G229 and D231. D231 is a binding site for Mg(2+). The segment at 338–346 is interaction with PCNA; sequence VQGRLDGFF.

The protein belongs to the XPG/RAD2 endonuclease family. FEN1 subfamily. As to quaternary structure, interacts with PCNA. Three molecules of FEN1 bind to one PCNA trimer with each molecule binding to one PCNA monomer. PCNA stimulates the nuclease activity without altering cleavage specificity. Requires Mg(2+) as cofactor. Phosphorylated. Phosphorylation upon DNA damage induces relocalization to the nuclear plasma.

The protein resides in the nucleus. It localises to the nucleolus. Its subcellular location is the nucleoplasm. The protein localises to the mitochondrion. Its function is as follows. Structure-specific nuclease with 5'-flap endonuclease and 5'-3' exonuclease activities involved in DNA replication and repair. During DNA replication, cleaves the 5'-overhanging flap structure that is generated by displacement synthesis when DNA polymerase encounters the 5'-end of a downstream Okazaki fragment. It enters the flap from the 5'-end and then tracks to cleave the flap base, leaving a nick for ligation. Also involved in the long patch base excision repair (LP-BER) pathway, by cleaving within the apurinic/apyrimidinic (AP) site-terminated flap. Acts as a genome stabilization factor that prevents flaps from equilibrating into structures that lead to duplications and deletions. Also possesses 5'-3' exonuclease activity on nicked or gapped double-stranded DNA, and exhibits RNase H activity. Also involved in replication and repair of rDNA and in repairing mitochondrial DNA. This is Flap endonuclease 1 from Vanderwaltozyma polyspora (strain ATCC 22028 / DSM 70294 / BCRC 21397 / CBS 2163 / NBRC 10782 / NRRL Y-8283 / UCD 57-17) (Kluyveromyces polysporus).